An 89-amino-acid polypeptide reads, in one-letter code: Small ribosomal subunit protein uS17 (89 aa).

This sequence belongs to the universal ribosomal protein uS17 family. In terms of assembly, part of the 30S ribosomal subunit.

Functionally, one of the primary rRNA binding proteins, it binds specifically to the 5'-end of 16S ribosomal RNA. In Leptospira borgpetersenii serovar Hardjo-bovis (strain JB197), this protein is Small ribosomal subunit protein uS17.